Consider the following 439-residue polypeptide: Xylose isomerase (439 aa).

Residues His-101 and Asp-104 contribute to the active site. Glu-232, Glu-268, His-271, Asp-296, Asp-307, Asp-309, and Asp-339 together coordinate Mg(2+).

This sequence belongs to the xylose isomerase family. As to quaternary structure, homotetramer. The cofactor is Mg(2+).

Its subcellular location is the cytoplasm. It carries out the reaction alpha-D-xylose = alpha-D-xylulofuranose. This Lactococcus lactis subsp. lactis (strain IL1403) (Streptococcus lactis) protein is Xylose isomerase (xylA).